A 1450-amino-acid chain; its full sequence is Sister chromatid cohesion protein PDS5 homolog (1450 aa).

Disordered stretches follow at residues 1-145, 680-707, and 1340-1450; these read MATR…KETK, VGGS…QQQQ, and LPPL…EVEN. A compositionally biased stretch (acidic residues) spans 45-59; the sequence is DDGELDSDIDEEDES. Over residues 77–138 the composition is skewed to low complexity; the sequence is KTQQQPQKSI…TSSSSQQSTQ (62 aa). The stretch at 650-716 forms a coiled coil; it reads KQLFKKYLEE…QLQQPENDIE (67 aa). Positions 682-691 are enriched in polar residues; sequence GSTTPTSKKS. Low complexity-rich tracts occupy residues 692-707 and 1350-1363; these read QPPQ…QQQQ and NNNN…STNN. The segment covering 1369–1378 has biased composition (basic and acidic residues); that stretch reads DENNNNKNDN. Low complexity predominate over residues 1387 to 1401; the sequence is NSTTAVPQKSIISKP. Basic residues predominate over residues 1402–1427; that stretch reads PAKKVSKKAAAKQKSPKKKTNKKKKQ. The span at 1430-1450 shows a compositional bias: acidic residues; sequence SEEEVSSSEEEDESQDEEVEN.

Belongs to the PDS5 family.

It localises to the nucleus. Functionally, may regulate sister chromatid cohesion during mitosis and couple it to DNA replication. This Dictyostelium discoideum (Social amoeba) protein is Sister chromatid cohesion protein PDS5 homolog.